The following is a 270-amino-acid chain: UPF0162 protein PA3419 (270 aa).

Belongs to the UPF0162 family.

The sequence is that of UPF0162 protein PA3419 from Pseudomonas aeruginosa (strain ATCC 15692 / DSM 22644 / CIP 104116 / JCM 14847 / LMG 12228 / 1C / PRS 101 / PAO1).